Consider the following 154-residue polypeptide: 6,7-dimethyl-8-ribityllumazine synthase (154 aa).

5-amino-6-(D-ribitylamino)uracil is bound by residues F23, 57 to 59 (AFE), and 81 to 83 (AII). 86–87 (ST) is a (2S)-2-hydroxy-3-oxobutyl phosphate binding site. The Proton donor role is filled by H89. Position 114 (F114) interacts with 5-amino-6-(D-ribitylamino)uracil. Residue R128 participates in (2S)-2-hydroxy-3-oxobutyl phosphate binding.

Belongs to the DMRL synthase family.

The catalysed reaction is (2S)-2-hydroxy-3-oxobutyl phosphate + 5-amino-6-(D-ribitylamino)uracil = 6,7-dimethyl-8-(1-D-ribityl)lumazine + phosphate + 2 H2O + H(+). It functions in the pathway cofactor biosynthesis; riboflavin biosynthesis; riboflavin from 2-hydroxy-3-oxobutyl phosphate and 5-amino-6-(D-ribitylamino)uracil: step 1/2. Its function is as follows. Catalyzes the formation of 6,7-dimethyl-8-ribityllumazine by condensation of 5-amino-6-(D-ribitylamino)uracil with 3,4-dihydroxy-2-butanone 4-phosphate. This is the penultimate step in the biosynthesis of riboflavin. The protein is 6,7-dimethyl-8-ribityllumazine synthase of Nitratiruptor sp. (strain SB155-2).